Reading from the N-terminus, the 399-residue chain is 3-sulfinopropanoyl-CoA desulfinase (399 aa).

FAD contacts are provided by residues Ile-121–Ser-124, Ser-130, and Tyr-153–Thr-156. Tyr-244–Asn-245 is a binding site for substrate. FAD-binding positions include Arg-273, Gln-340, Ser-344, Gly-367–Gln-371, and Gln-388.

Belongs to the acyl-CoA dehydrogenase family. Homotrimer or homotetramer. FAD is required as a cofactor.

It catalyses the reaction 3-sulfinopropanoyl-CoA + H2O = propanoyl-CoA + sulfite + H(+). Its function is as follows. Catalyzes the conversion 3-sulfinopropanoyl-CoA (3SP-CoA) to propanoyl-CoA by abstraction of sulfite. Does not show dehydrogenase activity. In Variovorax paradoxus, this protein is 3-sulfinopropanoyl-CoA desulfinase.